Reading from the N-terminus, the 107-residue chain is Nucleoid-associated protein Xfasm12_1216 (107 aa).

The protein belongs to the YbaB/EbfC family. In terms of assembly, homodimer.

Its subcellular location is the cytoplasm. The protein localises to the nucleoid. Functionally, binds to DNA and alters its conformation. May be involved in regulation of gene expression, nucleoid organization and DNA protection. The chain is Nucleoid-associated protein Xfasm12_1216 from Xylella fastidiosa (strain M12).